The sequence spans 259 residues: Phosphatidylserine decarboxylase proenzyme (259 aa).

Ser-183 serves as the catalytic Schiff-base intermediate with substrate; via pyruvic acid. Ser-183 bears the Pyruvic acid (Ser); by autocatalysis mark.

This sequence belongs to the phosphatidylserine decarboxylase family. PSD-A subfamily. In terms of assembly, heterodimer of a large membrane-associated beta subunit and a small pyruvoyl-containing alpha subunit. Pyruvate is required as a cofactor. Is synthesized initially as an inactive proenzyme. Formation of the active enzyme involves a self-maturation process in which the active site pyruvoyl group is generated from an internal serine residue via an autocatalytic post-translational modification. Two non-identical subunits are generated from the proenzyme in this reaction, and the pyruvate is formed at the N-terminus of the alpha chain, which is derived from the carboxyl end of the proenzyme. The post-translation cleavage follows an unusual pathway, termed non-hydrolytic serinolysis, in which the side chain hydroxyl group of the serine supplies its oxygen atom to form the C-terminus of the beta chain, while the remainder of the serine residue undergoes an oxidative deamination to produce ammonia and the pyruvoyl prosthetic group on the alpha chain.

The protein localises to the cell membrane. It carries out the reaction a 1,2-diacyl-sn-glycero-3-phospho-L-serine + H(+) = a 1,2-diacyl-sn-glycero-3-phosphoethanolamine + CO2. It participates in phospholipid metabolism; phosphatidylethanolamine biosynthesis; phosphatidylethanolamine from CDP-diacylglycerol: step 2/2. In terms of biological role, catalyzes the formation of phosphatidylethanolamine (PtdEtn) from phosphatidylserine (PtdSer). This Neisseria gonorrhoeae (strain NCCP11945) protein is Phosphatidylserine decarboxylase proenzyme.